Consider the following 357-residue polypeptide: 4-hydroxyphenylpyruvate dioxygenase (357 aa).

2 VOC domains span residues 12-129 and 158-313; these read GFEF…LIDR and IIDH…IFSE. Fe cation is bound by residues His-161, His-240, and Glu-322.

This sequence belongs to the 4HPPD family. Homotetramer. Requires Fe cation as cofactor.

It carries out the reaction 3-(4-hydroxyphenyl)pyruvate + O2 = homogentisate + CO2. The protein operates within amino-acid degradation; L-phenylalanine degradation; acetoacetate and fumarate from L-phenylalanine: step 3/6. This Pseudomonas sp. (strain P.J. 874) protein is 4-hydroxyphenylpyruvate dioxygenase (hpd).